The chain runs to 374 residues: Retron Eco8 reverse transcriptase (374 aa).

The Reverse transcriptase domain maps to 25 to 252; sequence ENIITQSAIP…KEISINGYVI (228 aa). Residues D107, D200, and D201 each contribute to the Mg(2+) site.

This sequence belongs to the bacterial reverse transcriptase family.

The enzyme catalyses DNA(n) + a 2'-deoxyribonucleoside 5'-triphosphate = DNA(n+1) + diphosphate. Its function is as follows. Reverse transcriptase (RT) component of antiviral defense system retron Eco8, composed of this RT, the following endonuclease and a non-coding RNA (ncRNA) encoded between them. Expression of retron Eco8 confers protection against bacteriophages T4, T6, T7 and SECphi4, SECphi6 and SECphi18. At multiplicity of infection (MOI) of 0.02 cultures slow growth when infected with SECphi4 but do not collapse, at MOI 2 cultures collapse. Responsible for synthesis of msDNA (a branched molecule with RNA linked by a 2',5'-phosphodiester bond to ssDNA). The retron transcript serves as primer (from a conserved internal G residue) and template for the reaction, and codes for the RT. This is Retron Eco8 reverse transcriptase from Escherichia coli.